A 255-amino-acid polypeptide reads, in one-letter code: Thrombin-like enzyme batroxobin (255 aa).

A signal peptide spans 1–18; that stretch reads MVLIRVIANLLILQVSYA. Positions 19-24 are excised as a propeptide; that stretch reads QKSSEL. Residues 25-247 form the Peptidase S1 domain; it reads VIGGDECDIN…YLPWIQSIIA (223 aa). 6 disulfide bridges follow: Cys31/Cys163, Cys50/Cys66, Cys98/Cys254, Cys142/Cys208, Cys174/Cys187, and Cys198/Cys223. Active-site charge relay system residues include His65 and Asp110. Asn170 is a glycosylation site (N-linked (GlcNAc...) asparagine). The Charge relay system role is filled by Ser202. Asn249 carries N-linked (GlcNAc...) asparagine glycosylation.

This sequence belongs to the peptidase S1 family. Snake venom subfamily. In terms of assembly, monomer. As to expression, expressed by the venom gland.

Its subcellular location is the secreted. The catalysed reaction is Selective cleavage of Arg-|-Xaa bond in fibrinogen, to form fibrin, and release fibrinopeptide A. The specificity of further degradation of fibrinogen varies with species origin of the enzyme.. Functionally, thrombin-like snake venom serine protease. Cleaves Arg-Gly bonds in fibrinogen alpha chains (FGA). The protein is Thrombin-like enzyme batroxobin of Bothrops atrox (Barba amarilla).